A 288-amino-acid polypeptide reads, in one-letter code: Protein CREG2 (288 aa).

The signal sequence occupies residues 1–31 (MSLSGRERPAWPGSRLSWLLCCSALLSPAAG). Residues 78–100 (AHKEDTHLRPRGSARARPAPAAR) are disordered. The N-linked (GlcNAc...) asparagine glycan is linked to asparagine 164.

Belongs to the CREG family. Brain specific.

The protein localises to the secreted. This Mus musculus (Mouse) protein is Protein CREG2 (Creg2).